The following is a 573-amino-acid chain: MRLTVGQVHRHVLALASSRSCFVLGDNLPLRMLSLPRAVRFHQTAWLGTETVQDKSASLTLASLEGQNKVEYGKKEKATRIGGPKPSSRASALKVKPKVSSFNSKPAKSTLPKSAVVKKTLKIDESLFSAKSFEELGLPPLLIDRLNKEGLSTPTEVQSAAIPIISQKHDAVIQSYTGSGKTLAYLLPILSEIGPLKRPTEQDGSDKRSGVEAVIVAPSRELGMQIVREVEKILGPNDKRLVQQLVGGANRSRQEEALKKNKPLIVVGTPGRISEISAGGKLHTHGCRFLVLDEVDQLLSFNYREDMHRILEHVGRKSGTSSRDILGPLARRSERQTILVSATIPFSVIRAARSWGHDPVLVRAMSVVPLDSITVPRPVLSQTDANPNSPSNSVNQAAVNSLPPSLEHYYCISKAQHKVDTLRRCIHALEAQTVIAFMNNTKPLKDVVFKLEARGMKATELHGDLGKLARSTVLKKFKDGEFRVLVTNELSARGLDVPECDLVINLDLPTDSTHYAHRAGRTGRLGRKGTVVTICEETETFVVRKMRKQLAVPIKPCEFTEGKLLVHNEEDVE.

The short motif at 131–159 is the Q motif element; that stretch reads KSFEELGLPPLLIDRLNKEGLSTPTEVQS. Positions 162–362 constitute a Helicase ATP-binding domain; that stretch reads IPIISQKHDA…RSWGHDPVLV (201 aa). An ATP-binding site is contributed by 175–182; sequence SYTGSGKT. Positions 293 to 296 match the DEAD box motif; that stretch reads DEVD. Residues 421 to 565 enclose the Helicase C-terminal domain; it reads TLRRCIHALE…PCEFTEGKLL (145 aa).

Belongs to the DEAD box helicase family.

It carries out the reaction ATP + H2O = ADP + phosphate + H(+). The protein is DEAD-box ATP-dependent RNA helicase 47B of Oryza sativa subsp. japonica (Rice).